The primary structure comprises 98 residues: Hainantoxin-XVII-2 (98 aa).

Positions 1-40 (MTTVGVSLFRRSPEKITMKIATFLGLSFLLIASYVLICEA) are cleaved as a signal peptide. Positions 41 to 64 (QHPGFQELLILEENMRDPENSKER) are excised as a propeptide. 2 cysteine pairs are disulfide-bonded: C66–C81 and C73–C85.

It belongs to the hainantoxin family. 17 subfamily. As to expression, expressed by the venom gland.

The protein resides in the secreted. Functionally, putative ion channel inhibitor. The protein is Hainantoxin-XVII-2 of Cyriopagopus hainanus (Chinese bird spider).